The sequence spans 1144 residues: Alpha-mannosidase 2 (1144 aa).

Topologically, residues 1 to 5 (MKLSR) are cytoplasmic. A helical; Signal-anchor for type II membrane protein transmembrane segment spans residues 6–26 (QFTVFGSAIFCVVIFSLYLML). Residues 27-1144 (DRGHLDYPRN…EISTFRIQLR (1118 aa)) are Lumenal-facing. N78 is a glycosylation site (N-linked (GlcNAc...) asparagine). 2 positions are modified to phosphoserine: S80 and S82. N-linked (GlcNAc...) asparagine glycosylation occurs at N93. Zn(2+) contacts are provided by H175, D177, D289, and H569. The active-site Nucleophile is the D289. N-linked (GlcNAc...) asparagine glycosylation is present at N1125.

It belongs to the glycosyl hydrolase 38 family. As to quaternary structure, homodimer; disulfide-linked. Zn(2+) is required as a cofactor. Post-translationally, glycosylated.

The protein resides in the golgi apparatus membrane. The enzyme catalyses N(4)-{beta-D-GlcNAc-(1-&gt;2)-alpha-D-Man-(1-&gt;3)-[alpha-D-Man-(1-&gt;3)-[alpha-D-Man-(1-&gt;6)]-alpha-D-Man-(1-&gt;6)]-beta-D-Man-(1-&gt;4)-beta-D-GlcNAc-(1-&gt;4)-beta-D-GlcNAc}-L-asparaginyl-[protein] + 2 H2O = 2 alpha-D-mannopyranose + an N(4)-{beta-D-GlcNAc-(1-&gt;2)-alpha-D-Man-(1-&gt;3)-[alpha-D-Man-(1-&gt;6)]-beta-D-Man-(1-&gt;4)-beta-D-GlcNAc-(1-&gt;4)-beta-D-GlcNAc}-L-asparaginyl-[protein]. It functions in the pathway protein modification; protein glycosylation. Its function is as follows. Catalyzes the first committed step in the biosynthesis of complex N-glycans. It controls conversion of high mannose to complex N-glycans; the final hydrolytic step in the N-glycan maturation pathway. The polypeptide is Alpha-mannosidase 2 (MAN2A1) (Homo sapiens (Human)).